We begin with the raw amino-acid sequence, 174 residues long: Protein RESISTANCE TO POWDERY MILDEW 8.2 (174 aa).

Positions 1 to 153 (MIAEVAAGGA…IMPQPKFEIH (153 aa)) constitute an RPW8 domain. A helical transmembrane segment spans residues 7–23 (AGGALGLALSVLHEAVK). Residues 68–145 (VNKRLKLLLE…EISTKLDKIM (78 aa)) adopt a coiled-coil conformation.

Belongs to the plant RPW8 protein family.

The protein resides in the membrane. In terms of biological role, disease resistance (R) protein that induces localized, salicylic acid-dependent defenses. Confers resistance to powdery mildew (e.g. Erysiphe cichoracearum UCSC1). This Arabidopsis thaliana (Mouse-ear cress) protein is Protein RESISTANCE TO POWDERY MILDEW 8.2.